The sequence spans 475 residues: ATP-dependent protease ATPase subunit HslU1 (475 aa).

A mitochondrion-targeting transit peptide spans 1–27 (MMRRVTSSLPSALKLGRSLGPNVRFSG). ATP is bound by residues I66, 108 to 113 (GVGKTE), D286, E353, and R425.

The protein belongs to the ClpX chaperone family. HslU subfamily. As to quaternary structure, a double ring-shaped homohexamer of HslV is capped on each side by a ring-shaped HslU homohexamer. The assembly of the HslU/HslV complex (HslVU) is dependent on binding of ATP.

It localises to the mitochondrion matrix. The protein resides in the kinetoplast. Functionally, ATPase subunit of a proteasome-like degradation complex; this subunit has chaperone activity. The binding of ATP and its subsequent hydrolysis by HslU are essential for unfolding of protein substrates subsequently hydrolyzed by HslV. HslU recognizes the N-terminal part of its protein substrates and unfolds these before they are guided to HslV for hydrolysis. The HslVU protease complex functions in mitochondrial DNA replication by regulating DNA helicase PIF2 protein levels. The protein is ATP-dependent protease ATPase subunit HslU1 (HslU1) of Trypanosoma brucei brucei (strain 927/4 GUTat10.1).